The primary structure comprises 153 residues: Proline-rich membrane anchor 1 (153 aa).

The first 35 residues, 1–35 (MLLRDLVPRHGCCWPSLLLHCALHPLWGLVQVTHA), serve as a signal peptide directing secretion. The Extracellular portion of the chain corresponds to 36–92 (EPQKSCSKVTDSCQHICQCRPPPPLPPPPPPPPPPRLLSAPAPNSTSCPAEDSWWSG). The PRAD domain occupies 56 to 70 (PPPPLPPPPPPPPPP). Positions 59 to 71 (PLPPPPPPPPPPR) are enriched in pro residues. Positions 59 to 79 (PLPPPPPPPPPPRLLSAPAPN) are disordered. Asn-79 is a glycosylation site (N-linked (GlcNAc...) asparagine). A helical transmembrane segment spans residues 93 to 113 (LVIIVAVVCASLVFLTVLVII). The Cytoplasmic portion of the chain corresponds to 114–153 (CYKAIKRKPLRKDENGTSVAEYPMSSSQSHKGVDVNAAVV). A disordered region spans residues 129-153 (GTSVAEYPMSSSQSHKGVDVNAAVV).

In terms of assembly, interacts with ACHE, probably through disulfide bonds. In terms of tissue distribution, predominantly expressed in the central nervous system, including in the brain. Also expressed in muscle, heart and kidney. Isoform 1 may be predominant in the cortex and striatum, while isoform 2 is more abundant in the cerebellum.

It localises to the cell membrane. The protein resides in the cell junction. It is found in the synapse. Required to anchor acetylcholinesterase (ACHE) to the basal lamina of the neuromuscular junction and to the membrane of neuronal synapses in brain. Also able to organize ACHE into tetramers. This chain is Proline-rich membrane anchor 1 (Prima1), found in Mus musculus (Mouse).